A 291-amino-acid chain; its full sequence is Polyamine aminopropyltransferase (291 aa).

The 241-residue stretch at 5–245 (PGPISLIEPL…YAVNYILGSL (241 aa)) folds into the PABS domain. Q36 contacts S-methyl-5'-thioadenosine. Spermidine-binding residues include H67 and E91. S-methyl-5'-thioadenosine-binding positions include D111 and 143–144 (DG). Catalysis depends on D164, which acts as the Proton acceptor.

The protein belongs to the spermidine/spermine synthase family. Homodimer or homotetramer.

It is found in the cytoplasm. The catalysed reaction is S-adenosyl 3-(methylsulfanyl)propylamine + putrescine = S-methyl-5'-thioadenosine + spermidine + H(+). The protein operates within amine and polyamine biosynthesis; spermidine biosynthesis; spermidine from putrescine: step 1/1. Catalyzes the irreversible transfer of a propylamine group from the amino donor S-adenosylmethioninamine (decarboxy-AdoMet) to putrescine (1,4-diaminobutane) to yield spermidine. The protein is Polyamine aminopropyltransferase of Pyrobaculum neutrophilum (strain DSM 2338 / JCM 9278 / NBRC 100436 / V24Sta) (Thermoproteus neutrophilus).